The chain runs to 131 residues: Small ribosomal subunit protein uS8 (131 aa).

This sequence belongs to the universal ribosomal protein uS8 family. As to quaternary structure, part of the 30S ribosomal subunit. Contacts proteins S5 and S12.

Its function is as follows. One of the primary rRNA binding proteins, it binds directly to 16S rRNA central domain where it helps coordinate assembly of the platform of the 30S subunit. In Desulforudis audaxviator (strain MP104C), this protein is Small ribosomal subunit protein uS8.